The chain runs to 343 residues: GTPase Obg (343 aa).

One can recognise an Obg domain in the interval 1–159; that stretch reads MKFLDEAKVY…HWLWLRLKLI (159 aa). In terms of domain architecture, OBG-type G spans 160-327; it reads ADAGLVGLPN…ALRALLAAMD (168 aa). GTP is bound by residues 166–173, 191–195, 212–215, 279–282, and 308–310; these read GLPNAGKS, FTTLH, DIPG, SKAD, and SAA. Serine 173 and threonine 193 together coordinate Mg(2+).

It belongs to the TRAFAC class OBG-HflX-like GTPase superfamily. OBG GTPase family. Monomer. The cofactor is Mg(2+).

Its subcellular location is the cytoplasm. Its function is as follows. An essential GTPase which binds GTP, GDP and possibly (p)ppGpp with moderate affinity, with high nucleotide exchange rates and a fairly low GTP hydrolysis rate. Plays a role in control of the cell cycle, stress response, ribosome biogenesis and in those bacteria that undergo differentiation, in morphogenesis control. In Methylobacterium sp. (strain 4-46), this protein is GTPase Obg.